The primary structure comprises 158 residues: NADH-quinone oxidoreductase subunit B 1 (158 aa).

Residues Cys37, Cys38, Cys102, and Cys132 each coordinate [4Fe-4S] cluster.

The protein belongs to the complex I 20 kDa subunit family. NDH-1 is composed of 14 different subunits. Subunits NuoB, C, D, E, F, and G constitute the peripheral sector of the complex. [4Fe-4S] cluster serves as cofactor.

It localises to the cell inner membrane. The enzyme catalyses a quinone + NADH + 5 H(+)(in) = a quinol + NAD(+) + 4 H(+)(out). Its function is as follows. NDH-1 shuttles electrons from NADH, via FMN and iron-sulfur (Fe-S) centers, to quinones in the respiratory chain. Couples the redox reaction to proton translocation (for every two electrons transferred, four hydrogen ions are translocated across the cytoplasmic membrane), and thus conserves the redox energy in a proton gradient. The polypeptide is NADH-quinone oxidoreductase subunit B 1 (Azoarcus sp. (strain BH72)).